Reading from the N-terminus, the 381-residue chain is Diguanylate cyclase DosC (381 aa).

H98 provides a ligand contact to heme. In terms of domain architecture, GGDEF spans 325-381 (TPLSVLIIDVDKFKEINDTWGHNTGDEILRKVSFLSQKRLVKSKILGAGSSRKLAVS). Residue D333 coordinates Mg(2+). Residues N341 and D350 each coordinate substrate.

Heme is required as a cofactor. The cofactor is Mg(2+).

It carries out the reaction 2 GTP = 3',3'-c-di-GMP + 2 diphosphate. The protein operates within purine metabolism; 3',5'-cyclic di-GMP biosynthesis. In terms of biological role, globin-coupled heme-based oxygen sensor protein displaying diguanylate cyclase (DGC) activity in response to oxygen availability. Thus, catalyzes the synthesis of cyclic diguanylate (c-di-GMP) via the condensation of 2 GTP molecules. Cyclic-di-GMP is a second messenger which controls cell surface-associated traits in bacteria. The chain is Diguanylate cyclase DosC (dosC) from Shigella flexneri.